A 144-amino-acid polypeptide reads, in one-letter code: Snake venom vascular endothelial growth factor toxin VR-1 (144 aa).

Residues 1–24 form the signal peptide; the sequence is MAAYLLAVAILFCIQGWPSGTVQG. The residue at position 25 (glutamine 25) is a Pyrrolidone carboxylic acid. 3 cysteine pairs are disulfide-bonded: cysteine 38–cysteine 80, cysteine 69–cysteine 115, and cysteine 73–cysteine 117. A compositionally biased stretch (basic and acidic residues) spans 120–134; it reads RWKQGEPEGPKEPRR. A disordered region spans residues 120–144; sequence RWKQGEPEGPKEPRRGGVRAKFPFD. A propeptide spanning residues 134–144 is cleaved from the precursor; that stretch reads RGGVRAKFPFD.

It belongs to the PDGF/VEGF growth factor family. Snake venom VEGF subfamily. As to quaternary structure, homodimer; disulfide-linked. Interacts with VEGF receptor-2 (KDR) with high affinity, but not with VEGF receptor-1 (Flt-1), VEGF receptor-3 (FLT4), and neuropilin-1 (NRP1). Expressed by the venom gland.

The protein localises to the secreted. Snake venom VEGFs may contribute to venom dispersion and prey subjugation by inducing vascular permeability and hypotension. This protein induces angiogenesis probably through VEGF receptor (KDR/VEGFR-2) signaling, as well as drastic hypotension. The hypotension is mediated by nitric oxide, which is produced by VEGF-activated endothelium NO synthase. May also induce vascular permeability. This Daboia russelii (Russel's viper) protein is Snake venom vascular endothelial growth factor toxin VR-1.